The sequence spans 252 residues: 5'-nucleotidase SurE (252 aa).

A divalent metal cation contacts are provided by aspartate 8, aspartate 9, serine 39, and asparagine 95.

The protein belongs to the SurE nucleotidase family. A divalent metal cation serves as cofactor.

The protein resides in the cytoplasm. The enzyme catalyses a ribonucleoside 5'-phosphate + H2O = a ribonucleoside + phosphate. Nucleotidase that shows phosphatase activity on nucleoside 5'-monophosphates. The protein is 5'-nucleotidase SurE of Clostridium botulinum (strain 657 / Type Ba4).